The sequence spans 410 residues: Putative F-box/kelch-repeat protein At1g15680 (410 aa).

The region spanning 13–58 (CKRRIELPEELLAEIVARLPFISITRFKSVCKGWRSLIESTYFRHL) is the F-box domain. 2 Kelch repeats span residues 177–227 (VVCM…SLKK) and 274–327 (AYTT…YFPV).

The protein is Putative F-box/kelch-repeat protein At1g15680 of Arabidopsis thaliana (Mouse-ear cress).